The sequence spans 859 residues: Leucine--tRNA ligase (859 aa).

Residues 43-53 carry the 'HIGH' region motif; it reads PYPSGRIHMGH. The 'KMSKS' region signature appears at 614–618; it reads KMSKS. Lys617 contacts ATP.

It belongs to the class-I aminoacyl-tRNA synthetase family.

It is found in the cytoplasm. It carries out the reaction tRNA(Leu) + L-leucine + ATP = L-leucyl-tRNA(Leu) + AMP + diphosphate. This is Leucine--tRNA ligase from Magnetococcus marinus (strain ATCC BAA-1437 / JCM 17883 / MC-1).